The primary structure comprises 385 residues: Protein pelota homolog (385 aa).

Lysine 162 participates in a covalent cross-link: Glycyl lysine isopeptide (Lys-Gly) (interchain with G-Cter in SUMO2). Phosphoserine is present on residues serine 374, serine 380, serine 381, and serine 382.

It belongs to the eukaryotic release factor 1 family. Pelota subfamily. As to quaternary structure, component of the Pelota-HBS1L complex, also named Dom34-Hbs1 complex, composed of PELO and HBS1L. Interacts with PINK1. Interacts with ABCE1. Interacts with CNOT4. The cofactor is a divalent metal cation.

Its subcellular location is the cytoplasm. Component of the Pelota-HBS1L complex, a complex that recognizes stalled ribosomes and triggers the No-Go Decay (NGD) pathway. In the Pelota-HBS1L complex, PELO recognizes ribosomes stalled at the 3' end of an mRNA and engages stalled ribosomes by destabilizing mRNA in the mRNA channel. Following mRNA extraction from stalled ribosomes by the SKI complex, the Pelota-HBS1L complex promotes recruitment of ABCE1, which drives the disassembly of stalled ribosomes, followed by degradation of damaged mRNAs as part of the NGD pathway. As part of the PINK1-regulated signaling, upon mitochondrial damage is recruited to the ribosome/mRNA-ribonucleoprotein complex associated to mitochondrial outer membrane thereby enabling the recruitment of autophagy receptors and induction of mitophagy. The polypeptide is Protein pelota homolog (Pelo) (Rattus norvegicus (Rat)).